Here is a 192-residue protein sequence, read N- to C-terminus: GTP cyclohydrolase-2 (192 aa).

50–54 (RLHSE) provides a ligand contact to GTP. The Zn(2+) site is built by Cys55, Cys66, and Cys68. Residues 92–94 (EGR) and Thr114 each bind GTP. The active-site Proton acceptor is the Asp126. Arg128 functions as the Nucleophile in the catalytic mechanism. GTP contacts are provided by Thr149 and Lys154.

It belongs to the GTP cyclohydrolase II family. The cofactor is Zn(2+).

It catalyses the reaction GTP + 4 H2O = 2,5-diamino-6-hydroxy-4-(5-phosphoribosylamino)-pyrimidine + formate + 2 phosphate + 3 H(+). The protein operates within cofactor biosynthesis; riboflavin biosynthesis; 5-amino-6-(D-ribitylamino)uracil from GTP: step 1/4. Catalyzes the conversion of GTP to 2,5-diamino-6-ribosylamino-4(3H)-pyrimidinone 5'-phosphate (DARP), formate and pyrophosphate. This is GTP cyclohydrolase-2 from Helicobacter pylori (strain J99 / ATCC 700824) (Campylobacter pylori J99).